A 294-amino-acid polypeptide reads, in one-letter code: Beta-glucoside kinase (294 aa).

5–11 (AFDIGGT) contacts ATP.

It belongs to the ROK (NagC/XylR) family.

The catalysed reaction is D-cellobiose + ATP = 6-phospho-beta-D-glucosyl-(1-&gt;4)-D-glucose + ADP + H(+). Catalyzes the ATP-dependent phosphorylation of cellobiose to produce cellobiose-6'-P. May have a dual role of kinase and transcriptional regulator of the cellobiose-PTS operon. In Listeria monocytogenes serovar 1/2a (strain ATCC BAA-679 / EGD-e), this protein is Beta-glucoside kinase (bglK).